Here is a 246-residue protein sequence, read N- to C-terminus: Exosome complex component Rrp41 (246 aa).

Belongs to the RNase PH family. Rrp41 subfamily. As to quaternary structure, component of the archaeal exosome complex. Forms a hexameric ring-like arrangement composed of 3 Rrp41-Rrp42 heterodimers. The hexameric ring associates with a trimer of Rrp4 and/or Csl4 subunits.

The protein localises to the cytoplasm. Its function is as follows. Catalytic component of the exosome, which is a complex involved in RNA degradation. Has 3'-&gt;5' exoribonuclease activity. Can also synthesize heteromeric RNA-tails. This Pyrobaculum arsenaticum (strain DSM 13514 / JCM 11321 / PZ6) protein is Exosome complex component Rrp41.